A 102-amino-acid chain; its full sequence is Small ribosomal subunit protein uS10 (102 aa).

Belongs to the universal ribosomal protein uS10 family. In terms of assembly, part of the 30S ribosomal subunit.

Its function is as follows. Involved in the binding of tRNA to the ribosomes. The sequence is that of Small ribosomal subunit protein uS10 from Nitrosomonas eutropha (strain DSM 101675 / C91 / Nm57).